The sequence spans 404 residues: Sodium/glutamate symporter (404 aa).

Helical transmembrane passes span 5–25 (FSTY…YFLV), 33–53 (TFNI…LLIW), 69–89 (TTMM…SRLI), 95–115 (LVVF…IGIA), 161–181 (IAIA…GPVA), 219–239 (SLIE…YLDV), 245–265 (ALQL…RNIL), 277–297 (AIDV…LMSL), 307–327 (IDVL…AIFI), 338–358 (AVVL…TAIA), and 373–393 (AFLI…AALL).

Belongs to the glutamate:Na(+) symporter (ESS) (TC 2.A.27) family.

Its subcellular location is the cell inner membrane. Its function is as follows. Catalyzes the sodium-dependent transport of glutamate. The polypeptide is Sodium/glutamate symporter (Haemophilus influenzae (strain ATCC 51907 / DSM 11121 / KW20 / Rd)).